The following is a 359-amino-acid chain: UPF0496 protein At3g57100 (359 aa).

Positions 179–208 (HEELAKMVVKLEKTMKDIDKKLRRVRGRRA) form a coiled coil. The helical transmembrane segment at 214–234 (LLAPVIAVIFLSKLVAGLVPI) threads the bilayer.

The protein belongs to the UPF0496 family.

The protein resides in the membrane. This chain is UPF0496 protein At3g57100, found in Arabidopsis thaliana (Mouse-ear cress).